Reading from the N-terminus, the 139-residue chain is Actin-depolymerizing factor 2 (139 aa).

The ADF-H domain occupies 7 to 139 (GLAVSDECKV…SLDIVKSRTN (133 aa)).

Belongs to the actin-binding proteins ADF family. In terms of tissue distribution, expressed in pollen.

Actin-depolymerizing protein. Severs actin filaments (F-actin) and binds to actin monomers. This chain is Actin-depolymerizing factor 2 (ADF2), found in Zea mays (Maize).